Consider the following 249-residue polypeptide: Triosephosphate isomerase (249 aa).

8 to 10 (NWK) contacts substrate. The active-site Electrophile is His-95. Glu-166 acts as the Proton acceptor in catalysis. Residues Gly-172, Ser-211, and 232-233 (GG) contribute to the substrate site.

This sequence belongs to the triosephosphate isomerase family. In terms of assembly, homodimer.

It is found in the cytoplasm. The catalysed reaction is D-glyceraldehyde 3-phosphate = dihydroxyacetone phosphate. Its pathway is carbohydrate biosynthesis; gluconeogenesis. It functions in the pathway carbohydrate degradation; glycolysis; D-glyceraldehyde 3-phosphate from glycerone phosphate: step 1/1. In terms of biological role, involved in the gluconeogenesis. Catalyzes stereospecifically the conversion of dihydroxyacetone phosphate (DHAP) to D-glyceraldehyde-3-phosphate (G3P). In Granulibacter bethesdensis (strain ATCC BAA-1260 / CGDNIH1), this protein is Triosephosphate isomerase.